We begin with the raw amino-acid sequence, 128 residues long: Glycine cleavage system H protein (128 aa).

The Lipoyl-binding domain maps to 22–104 (TVLVGITDYA…YGEGWIFRLK (83 aa)). Position 63 is an N6-lipoyllysine (Lys-63).

The protein belongs to the GcvH family. The glycine cleavage system is composed of four proteins: P, T, L and H. Monomer. (R)-lipoate is required as a cofactor.

In terms of biological role, the glycine cleavage system catalyzes the degradation of glycine. The H protein shuttles the methylamine group of glycine from the P protein to the T protein. The chain is Glycine cleavage system H protein from Thermus thermophilus (strain ATCC 27634 / DSM 579 / HB8).